We begin with the raw amino-acid sequence, 78 residues long: UPF0349 protein BLi03401/BL03152 (78 aa).

This sequence belongs to the UPF0349 family.

The chain is UPF0349 protein BLi03401/BL03152 from Bacillus licheniformis (strain ATCC 14580 / DSM 13 / JCM 2505 / CCUG 7422 / NBRC 12200 / NCIMB 9375 / NCTC 10341 / NRRL NRS-1264 / Gibson 46).